The sequence spans 82 residues: uncharacterized protein (82 aa).

2 helical membrane passes run 29–49 and 55–75; these read LMNA…GIII and WSLP…LTFF.

It localises to the cell membrane. This is an uncharacterized protein from Escherichia coli (strain K12).